A 60-amino-acid polypeptide reads, in one-letter code: Small, acid-soluble spore protein H (60 aa).

This sequence belongs to the SspH family.

It localises to the spore core. The chain is Small, acid-soluble spore protein H from Halalkalibacterium halodurans (strain ATCC BAA-125 / DSM 18197 / FERM 7344 / JCM 9153 / C-125) (Bacillus halodurans).